The primary structure comprises 310 residues: MEDKIKHKLRIGWSYLLFLKQRVIHDRLTVSAGYMAYITLLSLVPLITVLLSVLSQFPVFSGAGETVQAFVIQNFVPAASDAVEASLKEFISNTGKMTAVGSGFLFVASVMLISSIDRSLNYIWRVKKKRRPMYSFSLYWMILTLGPLLVGASLAATSYVTSLKIMDDEIVSSFYRTLLGWLPIILSFSAFVGLYLLVPNKKVRVTHALIGAMSAGCLFEFSKVGFAQYITQFPSYQVIYGALAAVPILFVWVYLCWIIVLIGAEITASLGEFEGWLTGKVSVNILESDIKALTEQQGLIESDSTDPESK.

Transmembrane regions (helical) follow at residues tyrosine 34–leucine 54, methionine 97–aspartate 117, phenylalanine 136–alanine 156, leucine 178–valine 198, histidine 207–alanine 227, and alanine 242–isoleucine 262.

Belongs to the UPF0761 family.

The protein localises to the cell inner membrane. This Aliivibrio fischeri (strain ATCC 700601 / ES114) (Vibrio fischeri) protein is UPF0761 membrane protein VF_0100.